The primary structure comprises 594 residues: DNA mismatch repair protein MutL (594 aa).

Belongs to the DNA mismatch repair MutL/HexB family.

Its function is as follows. This protein is involved in the repair of mismatches in DNA. It is required for dam-dependent methyl-directed DNA mismatch repair. May act as a 'molecular matchmaker', a protein that promotes the formation of a stable complex between two or more DNA-binding proteins in an ATP-dependent manner without itself being part of a final effector complex. This Rhizorhabdus wittichii (strain DSM 6014 / CCUG 31198 / JCM 15750 / NBRC 105917 / EY 4224 / RW1) (Sphingomonas wittichii) protein is DNA mismatch repair protein MutL.